The following is a 442-amino-acid chain: tRNA-2-methylthio-N(6)-dimethylallyladenosine synthase (442 aa).

The MTTase N-terminal domain maps to 6–122 (RKFYIHTFGC…LPVLIAEAGK (117 aa)). [4Fe-4S] cluster contacts are provided by Cys15, Cys51, Cys85, Cys157, Cys161, and Cys164. The Radical SAM core domain occupies 143 to 373 (RTQSLTAFVP…IDLQNGISAE (231 aa)). Residues 376–439 (RLAIGSVVEV…SATLIGRAAE (64 aa)) form the TRAM domain.

This sequence belongs to the methylthiotransferase family. MiaB subfamily. In terms of assembly, monomer. [4Fe-4S] cluster is required as a cofactor.

Its subcellular location is the cytoplasm. It carries out the reaction N(6)-dimethylallyladenosine(37) in tRNA + (sulfur carrier)-SH + AH2 + 2 S-adenosyl-L-methionine = 2-methylsulfanyl-N(6)-dimethylallyladenosine(37) in tRNA + (sulfur carrier)-H + 5'-deoxyadenosine + L-methionine + A + S-adenosyl-L-homocysteine + 2 H(+). Functionally, catalyzes the methylthiolation of N6-(dimethylallyl)adenosine (i(6)A), leading to the formation of 2-methylthio-N6-(dimethylallyl)adenosine (ms(2)i(6)A) at position 37 in tRNAs that read codons beginning with uridine. This chain is tRNA-2-methylthio-N(6)-dimethylallyladenosine synthase, found in Chlorobium limicola (strain DSM 245 / NBRC 103803 / 6330).